The chain runs to 488 residues: Serine/threonine-protein kinase 32C (488 aa).

A disordered region spans residues 1 to 56 (MRSGAERRGSSAAAPPSSPPPGRARPAGSDVSPALPPPAASQPRARDAGDARAQPR). Residues Ser10, Ser17, and Ser18 each carry the phosphoserine modification. Residues 24 to 33 (ARPAGSDVSP) show a composition bias toward low complexity. A Protein kinase domain is found at 94 to 354 (FQILRAIGKG…LQDMQTAPSL (261 aa)). Residues 100 to 108 (IGKGSFGKV) and Lys123 contribute to the ATP site. Asp217 acts as the Proton acceptor in catalysis. Over residues 397 to 406 (HKKKKRLAKN) the composition is skewed to basic residues. Disordered stretches follow at residues 397–420 (HKKK…QSEN) and 443–488 (KRSQ…SGSS).

Belongs to the protein kinase superfamily. Ser/Thr protein kinase family. It depends on Mg(2+) as a cofactor.

It carries out the reaction L-seryl-[protein] + ATP = O-phospho-L-seryl-[protein] + ADP + H(+). The catalysed reaction is L-threonyl-[protein] + ATP = O-phospho-L-threonyl-[protein] + ADP + H(+). In Mus musculus (Mouse), this protein is Serine/threonine-protein kinase 32C.